The following is a 137-amino-acid chain: Small ribosomal subunit protein uS12 (137 aa).

Positions 1–57 are disordered; that stretch reads MPTINQLVRKPRKSKVEKSKSPALNVGYNSHKKVQTNVSSPQKRGVATRVGTMTPKK. A 3-methylthioaspartic acid modification is found at D102.

It belongs to the universal ribosomal protein uS12 family. Part of the 30S ribosomal subunit. Contacts proteins S8 and S17. May interact with IF1 in the 30S initiation complex.

In terms of biological role, with S4 and S5 plays an important role in translational accuracy. Functionally, interacts with and stabilizes bases of the 16S rRNA that are involved in tRNA selection in the A site and with the mRNA backbone. Located at the interface of the 30S and 50S subunits, it traverses the body of the 30S subunit contacting proteins on the other side and probably holding the rRNA structure together. The combined cluster of proteins S8, S12 and S17 appears to hold together the shoulder and platform of the 30S subunit. The polypeptide is Small ribosomal subunit protein uS12 (Streptococcus sanguinis (strain SK36)).